The primary structure comprises 514 residues: Triacylglyceride transporter MAB_2807 (514 aa).

11 consecutive transmembrane segments (helical) span residues 19–39 (IAIG…YVVV), 58–78 (QVTP…PLLG), 88–108 (LILQ…ALST), 118–138 (VIQG…GADL), 157–177 (LGSV…GSWT), 178–198 (AIFW…QFSV), 210–230 (VDVV…VGLY), 239–259 (LPEW…AFIL), 278–298 (PFFA…VTLV), 316–336 (VFLL…GGWL), and 344–364 (IIAV…SGWP). Residues 371 to 380 (VHNFGFFTLP) are beta-hairpin. 3 helical membrane-spanning segments follow: residues 385–405 (DLVV…SAAL), 420–440 (VVVA…GWGI), and 485–505 (MFAI…FVGS).

This sequence belongs to the major facilitator superfamily. P55 (TC 2.A.1.3.34) family.

Its subcellular location is the cell inner membrane. In association with lipoprotein LprG probably transports triacyglycerides (TAG) across the inner cell membrane into the periplasm; TAG probably regulates lipid metabolism and growth regulation and plays a structural role in the outer membrane. TAG (and maybe other lipids) enters the central cavity of the P55 transporter from within the cell inner membrane via clefts on the cytoplasmic face of P55 between TM5-TM8 and TM2-TM11. From there the lipid is probably transferred to the hydrophobic cavity of LprG. Involved in drug susceptibilty, its expression partially complements the antibiotic susceptibilty of a double lprG-mfs deletion. Probably does not function as a bona fide drug efflux pump, but instead plays a role in outer membrane biogenesis. Probably required with LprG for normal surface localization of lipoarabinomannan (LAM). This Mycobacteroides abscessus (strain ATCC 19977 / DSM 44196 / CCUG 20993 / CIP 104536 / JCM 13569 / NCTC 13031 / TMC 1543 / L948) (Mycobacterium abscessus) protein is Triacylglyceride transporter MAB_2807.